Reading from the N-terminus, the 373-residue chain is Putative glutamate--cysteine ligase 2-1 (373 aa).

This sequence belongs to the glutamate--cysteine ligase type 2 family. YbdK subfamily.

The catalysed reaction is L-cysteine + L-glutamate + ATP = gamma-L-glutamyl-L-cysteine + ADP + phosphate + H(+). ATP-dependent carboxylate-amine ligase which exhibits weak glutamate--cysteine ligase activity. The protein is Putative glutamate--cysteine ligase 2-1 of Legionella pneumophila (strain Paris).